We begin with the raw amino-acid sequence, 122 residues long: Large ribosomal subunit protein uL14 (122 aa).

Belongs to the universal ribosomal protein uL14 family. As to quaternary structure, part of the 50S ribosomal subunit. Forms a cluster with proteins L3 and L19. In the 70S ribosome, L14 and L19 interact and together make contacts with the 16S rRNA in bridges B5 and B8.

Binds to 23S rRNA. Forms part of two intersubunit bridges in the 70S ribosome. The sequence is that of Large ribosomal subunit protein uL14 from Ureaplasma parvum serovar 3 (strain ATCC 27815 / 27 / NCTC 11736).